The following is a 291-amino-acid chain: Neugrin (291 aa).

Residues 1-15 form the signal peptide; that stretch reads MAVTLSLLLGGRVCA. Disordered regions lie at residues 26–48 and 155–270; these read GVAGPGPIGREPDPDSDWEPEER and GSGN…DNFS. Phosphoserine is present on serine 41. N-linked (GlcNAc...) asparagine glycosylation is found at asparagine 158 and asparagine 186. Polar residues predominate over residues 236 to 246; sequence KYSSDSESPRG. N-linked (GlcNAc...) asparagine glycosylation is present at asparagine 268.

The protein belongs to the neugrin family. Forms a regulatory protein-RNA complex, consisting of RCC1L, NGRN, RPUSD3, RPUSD4, TRUB2, FASTKD2 and 16S mt-rRNA. Interacts with 16S mt-rRNA; this interaction is direct. In terms of tissue distribution, expressed at high levels in heart, brain and skeletal muscle. In brain, mainly expressed in neurons rather than glial cells.

Its subcellular location is the nucleus. It localises to the secreted. It is found in the mitochondrion membrane. Functionally, plays an essential role in mitochondrial ribosome biogenesis. As a component of a functional protein-RNA module, consisting of RCC1L, NGRN, RPUSD3, RPUSD4, TRUB2, FASTKD2 and 16S mitochondrial ribosomal RNA (16S mt-rRNA), controls 16S mt-rRNA abundance and is required for intra-mitochondrial translation of core subunits of the oxidative phosphorylation system. This is Neugrin from Homo sapiens (Human).